The sequence spans 828 residues: Sarcolemmal membrane-associated protein (828 aa).

Positions 1–163 (MPSALAIFTC…AANTPSMYSQ (163 aa)) are necessary for targeting to centrosomes. Residues 1 to 802 (MPSALAIFTC…REKGNNKPWP (802 aa)) are Cytoplasmic-facing. In terms of domain architecture, FHA spans 28–85 (IKIGRSVARCRPAQNNATFDCKVLSRNHALVWFDHKTGKFYLQDTKSSNGTFINSQRL). S148 is modified (phosphoserine). Coiled-coil stretches lie at residues 167-202 (QLSQYLQEALHREQMLEQKLATLQRLLAITQEASDT) and 230-388 (NQTE…QEKT). Residues 339–359 (KKELQHKIDEMEEKEQELQAK) traverse the membrane as a helical; Anchor for type IV membrane protein segment. Over residues 433 to 446 (KLSKENQTRAKESD) the composition is skewed to basic and acidic residues. The tract at residues 433–467 (KLSKENQTRAKESDFSDTLSPSKEKSSDDTTDAQM) is disordered. Phosphoserine is present on residues S448 and S452. Residues 477–799 (AKVSLLKDDL…KLLREKGNNK (323 aa)) are a coiled coil. A helical; Anchor for type IV membrane protein membrane pass occupies residues 803 to 823 (WMPMLAALVAVTAIVLYVPGL). At 824–828 (ARASP) the chain is on the extracellular side.

Belongs to the SLMAP family. Homodimer. Interacts with myosin. Interacts with SIKE1 and both associate with the STRIPAK core complex composed of PP2A catalytic and scaffolding subunits, the striatins (PP2A regulatory subunits), the striatin-associated proteins MOB4, STRIP1 and STRIP2, PDCD10 and members of the STE20 kinases, such as STK24 and STK26. Interacts (via FHA domain) with STK3 (when phosphorylated); the interaction associates STK3 with the STRIPAK complex.

The protein localises to the cell membrane. It localises to the sarcolemma. The protein resides in the cytoplasm. It is found in the myofibril. Its subcellular location is the sarcomere. The protein localises to the m line. It localises to the z line. The protein resides in the cytoskeleton. It is found in the microtubule organizing center. Its subcellular location is the centrosome. The protein localises to the endoplasmic reticulum membrane. It localises to the mitochondrion membrane. Associates with the striatin-interacting phosphatase and kinase (STRIPAK) core complex, forming the extended (SIKE1:SLMAP)STRIPAK complex. The (SIKE1:SLMAP)STRIPAK complex dephosphorylates STK3 leading to the inhibition of Hippo signaling and the control of cell growth. May play a role during myoblast fusion. The chain is Sarcolemmal membrane-associated protein from Homo sapiens (Human).